Here is a 237-residue protein sequence, read N- to C-terminus: Ribonuclease PH (237 aa).

Residues Arg86 and 124–126 (GTR) each bind phosphate.

It belongs to the RNase PH family. As to quaternary structure, homohexameric ring arranged as a trimer of dimers.

It carries out the reaction tRNA(n+1) + phosphate = tRNA(n) + a ribonucleoside 5'-diphosphate. Phosphorolytic 3'-5' exoribonuclease that plays an important role in tRNA 3'-end maturation. Removes nucleotide residues following the 3'-CCA terminus of tRNAs; can also add nucleotides to the ends of RNA molecules by using nucleoside diphosphates as substrates, but this may not be physiologically important. Probably plays a role in initiation of 16S rRNA degradation (leading to ribosome degradation) during starvation. This chain is Ribonuclease PH, found in Shewanella sp. (strain W3-18-1).